We begin with the raw amino-acid sequence, 302 residues long: Lysosomal thioesterase PPT2 (302 aa).

The first 27 residues, 1 to 27 (MLGLCGQRLPAAWVLLLLPFLPLLLLA), serve as a signal peptide directing secretion. The N-linked (GlcNAc...) asparagine glycan is linked to asparagine 60. 2 disulfide bridges follow: cysteine 109–cysteine 117 and cysteine 165–cysteine 176. Serine 111 acts as the Nucleophile in catalysis. Asparagine 190 and asparagine 206 each carry an N-linked (GlcNAc...) asparagine glycan. Residue aspartate 228 is part of the active site. The N-linked (GlcNAc...) asparagine glycan is linked to asparagine 245. Cysteines 276 and 296 form a disulfide. Histidine 283 is a catalytic residue. The N-linked (GlcNAc...) asparagine glycan is linked to asparagine 289.

It belongs to the palmitoyl-protein thioesterase family. As to expression, broadly expressed, with highest levels in skeletal muscle.

It localises to the lysosome. The catalysed reaction is hexadecanoyl-CoA + H2O = hexadecanoate + CoA + H(+). The enzyme catalyses S-hexadecanoyl-N-acetylcysteamine + H2O = N-acetylcysteamine + hexadecanoate + H(+). In terms of biological role, catalyzes the cleavage of thioester bonds from S-palmitoyl-CoA or S-palmitoyl-N-acetylcysteamine (unbranched structures) but does not have activity against palmitoylcysteine or palmitoylated proteins, branched structures or bulky head groups. Conversely, hydrolyzes both long and short chain fatty acyl-CoA substrate. Functionally, catalytically inactive due to lack of active site His-283. This is Lysosomal thioesterase PPT2 from Homo sapiens (Human).